Here is a 227-residue protein sequence, read N- to C-terminus: MPENPSSSPTEPPEQSAAFEKWRSGLAQFTGLGLSESEKAERERLKAQGKLAKDWDKCEGWKRDLMNYSPMITFLLNHLKLAGCPFPSSAMQCHPCPENRAGGFSPDHGILLCQDRFFNKKHMEDTLAHELVHAFDHCRFKVDWGNLRHHACSEIRAANLSGDCRFTREVKRGFYAFNKQHQACVKRRAILSVLANPACTSPEMAERAVNEVWESCFTDTRPFDEIY.

Residue His-129 participates in a divalent metal cation binding. Glu-130 is a catalytic residue. An a divalent metal cation-binding site is contributed by His-133.

Belongs to the peptidase M76 family.

It localises to the mitochondrion inner membrane. Has a dual role in the assembly of mitochondrial ATPase. Acts as a protease that removes N-terminal residues of mitochondrial ATPase CF(0) subunit 6 at the intermembrane space side. Also involved in the correct assembly of the membrane-embedded ATPase CF(0) particle, probably mediating association of subunit 6 with the subunit 9 ring. The chain is Mitochondrial inner membrane protease ATP23 (ATP23) from Cryptococcus neoformans var. neoformans serotype D (strain B-3501A) (Filobasidiella neoformans).